A 288-amino-acid chain; its full sequence is Zinc finger protein 42 (288 aa).

2 stretches are compositionally biased toward basic and acidic residues: residues 1-11 and 26-38; these read MNEQKMNEQMK and ALDR…DEAR. Positions 1–48 are disordered; sequence MNEQKMNEQMKKTAKTSGQKGPGGRALDRLTLKQDEARPVQNTRVEAP. 4 consecutive C2H2-type zinc fingers follow at residues 170–194, 199–221, 227–251, and 258–281; these read LECP…MLVH, HVCA…FLVH, YQCT…IRIH, and VCPF…ILTH. Glycyl lysine isopeptide (Lys-Gly) (interchain with G-Cter in ubiquitin) cross-links involve residues Lys-213 and Lys-215.

Belongs to the krueppel C2H2-type zinc-finger protein family. Polyubiquitinated by RNF12, leading to proteasomal degradation. In terms of tissue distribution, restricted to testis, to germ cells in the early stages of spermatogenesis. Not expressed in spermatids, nor spermatozoa. Expressed in embryonic stem (ES) cells.

It localises to the nucleus. Involved in the reprogramming of X-chromosome inactivation during the acquisition of pluripotency. Required for efficient elongation of TSIX, a non-coding RNA antisense to XIST. Binds DXPas34 enhancer within the TSIX promoter. Involved in ES cell self-renewal. The protein is Zinc finger protein 42 (Zfp42) of Mus musculus (Mouse).